Here is a 338-residue protein sequence, read N- to C-terminus: Ornithine carbamoyltransferase (338 aa).

Residues 56–59 (STRT), R107, and 134–137 (HPTQ) contribute to the carbamoyl phosphate site. Residues N168, D232, and 236-237 (SM) contribute to the L-ornithine site. Carbamoyl phosphate contacts are provided by residues 274-275 (CL) and R320.

Belongs to the aspartate/ornithine carbamoyltransferase superfamily. OTCase family.

It localises to the cytoplasm. It catalyses the reaction carbamoyl phosphate + L-ornithine = L-citrulline + phosphate + H(+). It functions in the pathway amino-acid biosynthesis; L-arginine biosynthesis; L-arginine from L-ornithine and carbamoyl phosphate: step 1/3. Reversibly catalyzes the transfer of the carbamoyl group from carbamoyl phosphate (CP) to the N(epsilon) atom of ornithine (ORN) to produce L-citrulline. The protein is Ornithine carbamoyltransferase (argI) of Buchnera aphidicola subsp. Acyrthosiphon pisum (strain APS) (Acyrthosiphon pisum symbiotic bacterium).